A 122-amino-acid chain; its full sequence is uncharacterized protein (122 aa).

A compositionally biased stretch (basic and acidic residues) spans 1-15 (MAEPGGRGDYRKDGR). The disordered stretch occupies residues 1–49 (MAEPGGRGDYRKDGRLPSLSRSPLSTTLGTSPACGLEIPPTSGARPDGS). A compositionally biased stretch (low complexity) spans 16-32 (LPSLSRSPLSTTLGTSP).

This is an uncharacterized protein from Homo sapiens (Human).